A 600-amino-acid chain; its full sequence is MNIKFNLIIIILFILFISNVNCKKIKNKKHLTPQRLRRFVEHSKPISLNKKVWKITEIENIFSAQIELTFGIRQRNIVELEDFVWRVSDPNDSLYGSYKTFEEIKEWVKPLDESIDAVKNWLIENDINEFTVTKSGDFIRTIVSIDKAEELLSVRYNKMVHKLSKQSFFRSLDPYTIPRELYDHIDFIGGVNHLPLLSPRPKESSGSAGGGGGGKVNGIGYELESLRNNKQIKSFNDKKVAARNGDPYLSPDLIRKEMNVSQTSTNSTHLGNSQAIAQFLKEYFSPSDLKIFQYRFGLEPSQVDNIIGPNQNLNPGIETALDIQYIMAMAPDVPTWIVSTGGLHEGQEPFLDWLVDLSSNPKLPLVHSISYGDDESSIGLAYTDRVDTEFKKYAAMGRTIVFSSGDFGVGCNDDCDSFSPGWPASSRFVLAVGGVIKKKDGSIIGDEISGGGFSNYFSRPWYQVDECSSYIEWLNGSLSSFYNQSGRGFPDISSFSENVVILYKDKLMPIGGTSASAPIIAGLLSLINDQRLQKNQSPIGLFNPLLYKIARDHPNSFLDIDFGENNYKCCTNGFKSKSGWDPVTGLGLPNFDELVKYCLE.

The N-terminal stretch at M1 to C22 is a signal peptide. Residues K23–G220 constitute a propeptide, removed in mature form. Residues N91, N259, and N266 are each glycosylated (N-linked (GlcNAc...) asparagine). A Peptidase S53 domain is found at Y248–E600. Active-site charge relay system residues include E318 and D322. C411 and C570 are oxidised to a cystine. N-linked (GlcNAc...) asparagine glycans are attached at residues N475 and N483. The Charge relay system role is filled by S514. Ca(2+) is bound by residues D559, I560, G579, and D581.

In terms of assembly, monomer. It depends on Ca(2+) as a cofactor. Post-translationally, activated by autocatalytic proteolytical processing upon acidification. N-glycosylation is required for processing and activity.

The protein localises to the secreted. The catalysed reaction is Release of an N-terminal tripeptide from a polypeptide, but also has endopeptidase activity.. Functionally, serine protease with tripeptidyl-peptidase I activity. In Dictyostelium discoideum (Social amoeba), this protein is Tripeptidyl-peptidase 1 (tpp1).